A 215-amino-acid polypeptide reads, in one-letter code: Dual specificity phosphatase 29 (215 aa).

The Tyrosine-protein phosphatase domain maps to 53-201 (HVNEVWPRLH…LRELDKQLVK (149 aa)). Position 145-152 (145-152 (HCAMGRSR)) interacts with substrate. Residue cysteine 146 is the Phosphocysteine intermediate of the active site.

The protein belongs to the protein-tyrosine phosphatase family. Non-receptor class dual specificity subfamily. In terms of assembly, homodimer. Interacts with PRKAA2.

It localises to the cytoplasm. It is found in the nucleus. The catalysed reaction is O-phospho-L-tyrosyl-[protein] + H2O = L-tyrosyl-[protein] + phosphate. It carries out the reaction O-phospho-L-seryl-[protein] + H2O = L-seryl-[protein] + phosphate. It catalyses the reaction O-phospho-L-threonyl-[protein] + H2O = L-threonyl-[protein] + phosphate. Its function is as follows. Dual specificity phosphatase able to dephosphorylate phosphotyrosine, phosphoserine and phosphothreonine residues within the same substrate, with a preference for phosphotyrosine as a substrate. Involved in the modulation of intracellular signaling cascades. In skeletal muscle regulates systemic glucose homeostasis by activating, AMPK, an energy sensor protein kinase. Affects MAP kinase signaling though modulation of the MAPK1/2 cascade in skeletal muscle promoting muscle cell differentiation, development and atrophy. In Rattus norvegicus (Rat), this protein is Dual specificity phosphatase 29 (Dusp29).